We begin with the raw amino-acid sequence, 122 residues long: Large ribosomal subunit protein uL14 (122 aa).

The protein belongs to the universal ribosomal protein uL14 family. As to quaternary structure, part of the 50S ribosomal subunit. Forms a cluster with proteins L3 and L19. In the 70S ribosome, L14 and L19 interact and together make contacts with the 16S rRNA in bridges B5 and B8.

In terms of biological role, binds to 23S rRNA. Forms part of two intersubunit bridges in the 70S ribosome. The chain is Large ribosomal subunit protein uL14 from Cellvibrio japonicus (strain Ueda107) (Pseudomonas fluorescens subsp. cellulosa).